The chain runs to 329 residues: Serine/threonine-protein phosphatase PP2A catalytic subunit (329 aa).

The segment at 1-25 (MDNNMEIDAARSPEPHHLSPTTDPG) is disordered. Over residues 8-17 (DAARSPEPHH) the composition is skewed to basic and acidic residues. 4 residues coordinate Mn(2+): Asp77, His79, Asp105, and Asn137. His138 functions as the Proton donor in the catalytic mechanism. His187 and His261 together coordinate Mn(2+). Residue Leu329 is modified to Leucine methyl ester.

It belongs to the PPP phosphatase family. PP-2A subfamily. The cofactor is Mn(2+).

It catalyses the reaction O-phospho-L-seryl-[protein] + H2O = L-seryl-[protein] + phosphate. The catalysed reaction is O-phospho-L-threonyl-[protein] + H2O = L-threonyl-[protein] + phosphate. In terms of biological role, involved in hyphal morphogenesis. The protein is Serine/threonine-protein phosphatase PP2A catalytic subunit (pphA) of Emericella nidulans (strain FGSC A4 / ATCC 38163 / CBS 112.46 / NRRL 194 / M139) (Aspergillus nidulans).